Reading from the N-terminus, the 423-residue chain is Galactosylceramide sulfotransferase (423 aa).

At 1-12 (MTLLPKKPCKSK) the chain is on the cytoplasmic side. A helical; Signal-anchor for type II membrane protein membrane pass occupies residues 13–35 (AKGLLLGALFTSFLLLLYSYVVP). Over 36–423 (PLYPNMAFTT…WKFLRDFLRW (388 aa)) the chain is Lumenal. Residues Asn66 and Asn312 are each glycosylated (N-linked (GlcNAc...) asparagine).

Belongs to the galactose-3-O-sulfotransferase family. In terms of tissue distribution, expressed in brain, testis, kidney, stomach, small intestine, liver, and lung. Not detected in heart, skeletal muscle, and spleen.

The protein resides in the golgi apparatus membrane. It carries out the reaction a beta-D-galactosyl-(1&lt;-&gt;1')-N-acylsphing-4-enine + 3'-phosphoadenylyl sulfate = an N-acyl-1-beta-D-(3-O-sulfo)-galactosyl-sphing-4-enine + adenosine 3',5'-bisphosphate + H(+). The enzyme catalyses a 1-O-alkyl-2-acyl-3-O-(beta-D-galactosyl)-sn-glycerol + 3'-phosphoadenylyl sulfate = a 1-O-alkyl-2-acyl-3-(beta-D-3-sulfogalactosyl)-sn-glycerol + adenosine 3',5'-bisphosphate + H(+). The catalysed reaction is a beta-D-Gal-(1&lt;-&gt;1')-ceramide + 3'-phosphoadenylyl sulfate = 1-(3-O-sulfo-beta-D-galactosyl)-ceramide + adenosine 3',5'-bisphosphate + H(+). It catalyses the reaction a 1,2-diacyl-3-O-(beta-D-galactosyl)-sn-glycerol + 3'-phosphoadenylyl sulfate = 1,2-diacyl-3-(3-O-sulfo-beta-D-galactosyl)-sn-glycerol + adenosine 3',5'-bisphosphate + H(+). It carries out the reaction a beta-D-Gal-(1-&gt;4)-beta-D-Glc-(1&lt;-&gt;1)-Cer(d18:1(4E)) + 3'-phosphoadenylyl sulfate = beta-D-3-sulfogalactosyl-(1-&gt;4)-beta-D-glucosyl-(1&lt;-&gt;1')-N-acylsphing-4-enine + adenosine 3',5'-bisphosphate + H(+). It functions in the pathway lipid metabolism; sphingolipid metabolism. Its function is as follows. Catalyzes the transfer of a sulfate group to position 3 of non-reducing beta-galactosyl residues in glycerolipids and sphingolipids, therefore participates in the biosynthesis of sulfoglycolipids. Catalyzes the synthesis of galactosylceramide sulfate (sulfatide), a major lipid component of the myelin sheath and of monogalactosylalkylacylglycerol sulfate (seminolipid), present in spermatocytes. Seems to prefer beta-glycosides at the non-reducing termini of sugar chains attached to a lipid moiety. Also acts on lactosylceramide, galactosyl 1-alkyl-2-sn-glycerol and galactosyl diacylglycerol (in vitro). In Mus musculus (Mouse), this protein is Galactosylceramide sulfotransferase.